A 37-amino-acid chain; its full sequence is Natriuretic peptide PNP (37 aa).

A disulfide bridge links Cys14 with Cys30.

As to expression, expressed by the venom gland.

The protein resides in the secreted. Its function is as follows. Increases urine flow and decreases blood pressure when administered to rats by intravenous injection. Inhibits thrombin-induced platelet aggregation. Stimulates cGMP production via the natriuretic peptide receptor-A (NPR1). The chain is Natriuretic peptide PNP from Pseudocerastes persicus (Persian horned viper).